A 266-amino-acid chain; its full sequence is Trehalose-6-phosphate phosphatase (266 aa).

The active-site Nucleophile is D20. Mg(2+) is bound by residues D20, D22, and D198. D20–D22 contributes to the substrate binding site.

This sequence belongs to the trehalose phosphatase family. The cofactor is Mg(2+). Requires Mn(2+) as cofactor. Co(2+) is required as a cofactor. It depends on Zn(2+) as a cofactor.

It carries out the reaction alpha,alpha-trehalose 6-phosphate + H2O = alpha,alpha-trehalose + phosphate. It functions in the pathway glycan biosynthesis; trehalose biosynthesis. In terms of biological role, removes the phosphate from trehalose 6-phosphate (Tre6P) to produce free trehalose. Also catalyzes the dephosphorylation of glucose-6-phosphate (Glu6P) and 2-deoxyglucose-6-phosphate (2dGlu6P). The chain is Trehalose-6-phosphate phosphatase (otsB) from Escherichia coli (strain K12).